Here is a 216-residue protein sequence, read N- to C-terminus: Capsule polysaccharide export ATP-binding protein CtrD (216 aa).

The region spanning isoleucine 2 to leucine 215 is the ABC transporter domain. Residue glycine 38 to serine 45 coordinates ATP.

Belongs to the ABC transporter superfamily.

It is found in the cell inner membrane. It catalyses the reaction ATP + H2O + capsular polysaccharide-[capsular polysaccharide-binding protein]Side 1 = ADP + phosphate + capsular polysaccharideSide 2 + [capsular polysaccharide-binding protein]Side 1.. In terms of biological role, putative ATP-binding protein, and an energy-coupling component of capsule polysaccharide export apparatus. The protein is Capsule polysaccharide export ATP-binding protein CtrD (ctrD) of Neisseria meningitidis serogroup B (strain ATCC BAA-335 / MC58).